The following is a 462-amino-acid chain: Protein ultraspiracle homolog (462 aa).

The tract at residues 1 to 113 (MSSVAKKDKR…NHPLSGSKHL (113 aa)) is modulating. 2 NR C4-type zinc fingers span residues 114–134 (CSIC…CEGC) and 150–174 (CRED…YQKC). Positions 114–179 (CSICGDRASG…RYQKCLACGM (66 aa)) form a DNA-binding region, nuclear receptor. A hinge region spans residues 180–201 (KREAVQEERQRAARRTEDAHPS). Residues 204-453 (VQELSIERLL…SYIRDALCNH (250 aa)) enclose the NR LBD domain.

It belongs to the nuclear hormone receptor family. NR2 subfamily. Heterodimer of USP and ECR. Abundant expression seen in males and ovaries.

The protein resides in the nucleus. In Bombyx mori (Silk moth), this protein is Protein ultraspiracle homolog (USP).